We begin with the raw amino-acid sequence, 243 residues long: Ubiquinone/menaquinone biosynthesis C-methyltransferase UbiE (243 aa).

S-adenosyl-L-methionine-binding positions include Thr69, Asp90, and 116–117; that span reads DA.

This sequence belongs to the class I-like SAM-binding methyltransferase superfamily. MenG/UbiE family.

It carries out the reaction a 2-demethylmenaquinol + S-adenosyl-L-methionine = a menaquinol + S-adenosyl-L-homocysteine + H(+). The catalysed reaction is a 2-methoxy-6-(all-trans-polyprenyl)benzene-1,4-diol + S-adenosyl-L-methionine = a 5-methoxy-2-methyl-3-(all-trans-polyprenyl)benzene-1,4-diol + S-adenosyl-L-homocysteine + H(+). The protein operates within quinol/quinone metabolism; menaquinone biosynthesis; menaquinol from 1,4-dihydroxy-2-naphthoate: step 2/2. It functions in the pathway cofactor biosynthesis; ubiquinone biosynthesis. Its function is as follows. Methyltransferase required for the conversion of demethylmenaquinol (DMKH2) to menaquinol (MKH2) and the conversion of 2-polyprenyl-6-methoxy-1,4-benzoquinol (DDMQH2) to 2-polyprenyl-3-methyl-6-methoxy-1,4-benzoquinol (DMQH2). This chain is Ubiquinone/menaquinone biosynthesis C-methyltransferase UbiE, found in Ralstonia nicotianae (strain ATCC BAA-1114 / GMI1000) (Ralstonia solanacearum).